Here is a 712-residue protein sequence, read N- to C-terminus: Polyribonucleotide nucleotidyltransferase (712 aa).

2 residues coordinate Mg(2+): Asp-487 and Asp-493. Residues 554–613 (PRIHTMKISVEKIKDVIGKGGAVIRQLTEETGTTIEIEDDGTIKIAATDGDQAKEAIRRI) enclose the KH domain. The S1 motif domain occupies 623-691 (GVIYTGKVAR…RQGRVRLSMK (69 aa)).

Belongs to the polyribonucleotide nucleotidyltransferase family. Component of the RNA degradosome, which is a multiprotein complex involved in RNA processing and mRNA degradation. Mg(2+) serves as cofactor.

The protein localises to the cytoplasm. It carries out the reaction RNA(n+1) + phosphate = RNA(n) + a ribonucleoside 5'-diphosphate. Involved in mRNA degradation. Catalyzes the phosphorolysis of single-stranded polyribonucleotides processively in the 3'- to 5'-direction. This chain is Polyribonucleotide nucleotidyltransferase, found in Vibrio cholerae serotype O1 (strain ATCC 39541 / Classical Ogawa 395 / O395).